A 338-amino-acid chain; its full sequence is Aspartate carbamoyltransferase catalytic subunit (338 aa).

The carbamoyl phosphate site is built by R59 and T60. An L-aspartate-binding site is contributed by K87. Residues R109, H142, and Q145 each coordinate carbamoyl phosphate. L-aspartate-binding residues include R182 and R248. Residues G289 and P290 each contribute to the carbamoyl phosphate site.

Belongs to the aspartate/ornithine carbamoyltransferase superfamily. ATCase family. As to quaternary structure, heterododecamer (2C3:3R2) of six catalytic PyrB chains organized as two trimers (C3), and six regulatory PyrI chains organized as three dimers (R2).

It catalyses the reaction carbamoyl phosphate + L-aspartate = N-carbamoyl-L-aspartate + phosphate + H(+). It participates in pyrimidine metabolism; UMP biosynthesis via de novo pathway; (S)-dihydroorotate from bicarbonate: step 2/3. Its function is as follows. Catalyzes the condensation of carbamoyl phosphate and aspartate to form carbamoyl aspartate and inorganic phosphate, the committed step in the de novo pyrimidine nucleotide biosynthesis pathway. The protein is Aspartate carbamoyltransferase catalytic subunit of Synechococcus elongatus (strain ATCC 33912 / PCC 7942 / FACHB-805) (Anacystis nidulans R2).